Here is a 378-residue protein sequence, read N- to C-terminus: SPbeta prophage-derived uncharacterized protein YorJ (378 aa).

This Bacillus subtilis (strain 168) protein is SPbeta prophage-derived uncharacterized protein YorJ (yorJ).